The following is a 149-amino-acid chain: Ubiquitin-conjugating enzyme E2 pex4 (149 aa).

Positions 1–149 (MAARLMKEYK…ARMYTRLYGC (149 aa)) constitute a UBC core domain. Cysteine 86 serves as the catalytic Glycyl thioester intermediate.

It belongs to the ubiquitin-conjugating enzyme family.

It carries out the reaction S-ubiquitinyl-[E1 ubiquitin-activating enzyme]-L-cysteine + [E2 ubiquitin-conjugating enzyme]-L-cysteine = [E1 ubiquitin-activating enzyme]-L-cysteine + S-ubiquitinyl-[E2 ubiquitin-conjugating enzyme]-L-cysteine.. It participates in protein modification; protein ubiquitination. Functionally, catalyzes the covalent attachment of ubiquitin to other proteins. Essential for peroxisome biogenesis. In Dictyostelium discoideum (Social amoeba), this protein is Ubiquitin-conjugating enzyme E2 pex4 (pex4).